Here is a 657-residue protein sequence, read N- to C-terminus: Glycogen debranching enzyme (657 aa).

Aspartate 336 (nucleophile) is an active-site residue. Glutamate 371 acts as the Proton donor in catalysis. Positions 460 to 479 (ANGEENRDGTNNNYSNNHGK) are disordered.

This sequence belongs to the glycosyl hydrolase 13 family.

The enzyme catalyses Hydrolysis of (1-&gt;6)-alpha-D-glucosidic linkages to branches with degrees of polymerization of three or four glucose residues in limit dextrin.. Its pathway is glycan degradation; glycogen degradation. Functionally, removes maltotriose and maltotetraose chains that are attached by 1,6-alpha-linkage to the limit dextrin main chain, generating a debranched limit dextrin. The protein is Glycogen debranching enzyme of Escherichia coli O6:K15:H31 (strain 536 / UPEC).